A 354-amino-acid chain; its full sequence is Uroporphyrinogen decarboxylase (354 aa).

Substrate-binding positions include 27–31, aspartate 77, tyrosine 154, threonine 209, and histidine 327; that span reads RQAGR.

The protein belongs to the uroporphyrinogen decarboxylase family. Homodimer.

It localises to the cytoplasm. The catalysed reaction is uroporphyrinogen III + 4 H(+) = coproporphyrinogen III + 4 CO2. It functions in the pathway porphyrin-containing compound metabolism; protoporphyrin-IX biosynthesis; coproporphyrinogen-III from 5-aminolevulinate: step 4/4. In terms of biological role, catalyzes the decarboxylation of four acetate groups of uroporphyrinogen-III to yield coproporphyrinogen-III. The sequence is that of Uroporphyrinogen decarboxylase from Salmonella dublin (strain CT_02021853).